Reading from the N-terminus, the 315-residue chain is Homoserine O-succinyltransferase (315 aa).

The active-site Acyl-thioester intermediate is Cys-142. Residues Lys-163 and Ser-192 each coordinate substrate. The active-site Proton acceptor is the His-235. Glu-237 is an active-site residue. Arg-249 is a binding site for substrate.

Belongs to the MetA family.

It localises to the cytoplasm. It carries out the reaction L-homoserine + succinyl-CoA = O-succinyl-L-homoserine + CoA. It functions in the pathway amino-acid biosynthesis; L-methionine biosynthesis via de novo pathway; O-succinyl-L-homoserine from L-homoserine: step 1/1. Its function is as follows. Transfers a succinyl group from succinyl-CoA to L-homoserine, forming succinyl-L-homoserine. In Shewanella piezotolerans (strain WP3 / JCM 13877), this protein is Homoserine O-succinyltransferase.